The following is a 121-amino-acid chain: Type II secretion system protein I (121 aa).

Positions 1-6 (MRRQKG) are cleaved as a propeptide — leader sequence. N-methylmethionine is present on Met7. Residues 7–27 (MTLVEVLVALSVFALAGIAVL) traverse the membrane as a helical segment.

This sequence belongs to the GSP I family. As to quaternary structure, type II secretion is composed of four main components: the outer membrane complex, the inner membrane complex, the cytoplasmic secretion ATPase and the periplasm-spanning pseudopilus. Interacts with core component OutG. In terms of processing, cleaved by prepilin peptidase. Methylated by prepilin peptidase at the amino group of the N-terminal methionine once the leader sequence is cleaved by prepilin peptidase.

It localises to the cell inner membrane. In terms of biological role, component of the type II secretion system required for the energy-dependent secretion of extracellular factors such as proteases and toxins from the periplasm. Part of the pseudopilus tip complex that is critical for the recognition and binding of secretion substrates. The polypeptide is Type II secretion system protein I (outI) (Pectobacterium carotovorum subsp. carotovorum (Erwinia carotovora subsp. carotovora)).